The sequence spans 216 residues: Peroxiredoxin (216 aa).

The region spanning 2 to 158 is the Thioredoxin domain; it reads VVIGEKFPEV…ILRLVKALKV (157 aa). Catalysis depends on C46, which acts as the Cysteine sulfenic acid (-SOH) intermediate. R121 lines the substrate pocket. Cysteines 205 and 211 form a disulfide.

It belongs to the peroxiredoxin family. Prx6 subfamily. Homodecamer. Pentamer of dimers that assemble into a ring structure.

Its subcellular location is the cytoplasm. It carries out the reaction a hydroperoxide + [thioredoxin]-dithiol = an alcohol + [thioredoxin]-disulfide + H2O. Functionally, thiol-specific peroxidase that catalyzes the reduction of hydrogen peroxide and organic hydroperoxides to water and alcohols, respectively. Plays a role in cell protection against oxidative stress by detoxifying peroxides. The polypeptide is Peroxiredoxin (Thermococcus kodakarensis (strain ATCC BAA-918 / JCM 12380 / KOD1) (Pyrococcus kodakaraensis (strain KOD1))).